The primary structure comprises 297 residues: Bifunctional protein FolD (297 aa).

NADP(+) is bound by residues 168-170 (GRS), Thr197, and Val238.

It belongs to the tetrahydrofolate dehydrogenase/cyclohydrolase family. Homodimer.

It carries out the reaction (6R)-5,10-methylene-5,6,7,8-tetrahydrofolate + NADP(+) = (6R)-5,10-methenyltetrahydrofolate + NADPH. The catalysed reaction is (6R)-5,10-methenyltetrahydrofolate + H2O = (6R)-10-formyltetrahydrofolate + H(+). Its pathway is one-carbon metabolism; tetrahydrofolate interconversion. Its function is as follows. Catalyzes the oxidation of 5,10-methylenetetrahydrofolate to 5,10-methenyltetrahydrofolate and then the hydrolysis of 5,10-methenyltetrahydrofolate to 10-formyltetrahydrofolate. In Lawsonia intracellularis (strain PHE/MN1-00), this protein is Bifunctional protein FolD.